Reading from the N-terminus, the 98-residue chain is ATP-dependent Clp protease adapter protein ClpS (98 aa).

Belongs to the ClpS family. Binds to the N-terminal domain of the chaperone ClpA.

Involved in the modulation of the specificity of the ClpAP-mediated ATP-dependent protein degradation. The protein is ATP-dependent Clp protease adapter protein ClpS of Synechocystis sp. (strain ATCC 27184 / PCC 6803 / Kazusa).